A 177-amino-acid chain; its full sequence is Mitochondrial inner membrane protease subunit 2 (177 aa).

Catalysis depends on residues Ser41 and Lys91. A helical membrane pass occupies residues 134 to 152 (TFGPISSGLVIGKAITIVW).

The protein belongs to the peptidase S26 family. IMP2 subfamily. Component of the mitochondrial inner membrane peptidase (IMP) complex which at least consists of IMP1, IMP2 and SOM1. The N-terminus is blocked.

The protein localises to the mitochondrion inner membrane. Catalytic component of the mitochondrial inner membrane peptidase (IMP) complex. IMP catalyzes the removal of signal peptides required for the targeting of proteins from the mitochondrial matrix, across the inner membrane, into the inter-membrane space. The two catalytic IMP subunits seem to have non-overlapping substrate specificities. IMP2 substrates include nuclear encoded CYB2, mitochondrially encoded COX2 and cytochrome c1. Required for the stability of IMP1. The sequence is that of Mitochondrial inner membrane protease subunit 2 (IMP2) from Saccharomyces cerevisiae (strain ATCC 204508 / S288c) (Baker's yeast).